The chain runs to 65 residues: Large ribosomal subunit protein uL29 (65 aa).

Belongs to the universal ribosomal protein uL29 family.

The chain is Large ribosomal subunit protein uL29 (rpmC) from Buchnera aphidicola subsp. Acyrthosiphon pisum (strain APS) (Acyrthosiphon pisum symbiotic bacterium).